Consider the following 250-residue polypeptide: Ribosomal RNA small subunit methyltransferase J (250 aa).

Residues 101–102, 117–118, 153–154, and D171 each bind S-adenosyl-L-methionine; these read RD, ER, and SS.

The protein belongs to the methyltransferase superfamily. RsmJ family.

Its subcellular location is the cytoplasm. The enzyme catalyses guanosine(1516) in 16S rRNA + S-adenosyl-L-methionine = N(2)-methylguanosine(1516) in 16S rRNA + S-adenosyl-L-homocysteine + H(+). Specifically methylates the guanosine in position 1516 of 16S rRNA. This chain is Ribosomal RNA small subunit methyltransferase J, found in Escherichia coli (strain UTI89 / UPEC).